The sequence spans 267 residues: MEMO1 family protein MA_0601 (267 aa).

The protein belongs to the MEMO1 family.

The sequence is that of MEMO1 family protein MA_0601 from Methanosarcina acetivorans (strain ATCC 35395 / DSM 2834 / JCM 12185 / C2A).